We begin with the raw amino-acid sequence, 893 residues long: Desmocollin-1 (893 aa).

The first 29 residues, 1–29, serve as a signal peptide directing secretion; sequence MAVASAAPGSIFWKQLLFSLLVLILFCDA. A propeptide spanning residues 30–132 is cleaved from the precursor; sequence CQKISLQVPS…KDAVLRRTKR (103 aa). Cadherin domains follow at residues 133–240, 241–352, 353–470, 471–574, and 575–682; these read RWAP…APYF, ENKL…APYF, TETS…GPEC, QPPV…DHPP, and QIKQ…LSRE. Residues 133–692 lie on the Extracellular side of the membrane; it reads RWAPIPCSLM…AALANVFLGK (560 aa). An N-linked (GlcNAc...) asparagine glycan is attached at Asn163. Residue Thr383 is modified to Phosphothreonine. N-linked (GlcNAc...) asparagine glycosylation is found at Asn398 and Asn545. The helical transmembrane segment at 693–715 threads the bilayer; that stretch reads WAILAMVLGSVLLLCILFTCFCV. The Cytoplasmic segment spans residues 716–893; the sequence is TVKKTVKKCF…RTLAKTCVKK (178 aa).

In terms of assembly, binds to JUP/plakoglobin. Post-translationally, isoform 1A is phosphorylated on a serine but isoform 1B is not. In terms of tissue distribution, epidermis and weakly in tongue papillae.

The protein resides in the cell membrane. It is found in the cell junction. It localises to the desmosome. In terms of biological role, a component of desmosome cell-cell junctions which are required for positive regulation of cellular adhesion. Required for desmosome adhesion strength between the granular layers of the epidermis, as a result moderates epidermal proliferation and differentiation. Is therefore required to maintain postnatal epidermal barrier function and normal hair follicle morphology into adulthood. This is Desmocollin-1 (DSC1) from Bos taurus (Bovine).